The chain runs to 277 residues: Adenylate kinase (277 aa).

53 to 58 (GAGKGT) provides a ligand contact to ATP. The NMP stretch occupies residues 73-102 (ATGDMLRAQVAAKTPLGREAKKIMDAGGLV). AMP contacts are provided by residues Thr74, Arg79, 100–102 (GLV), 129–132 (GFPR), and Gln136. An LID region spans residues 170-207 (GRLVHPASGRSYHKIFNPPKAPMTDDATGEPLIQRSDD). ATP-binding positions include Arg171 and 180–181 (SY). AMP-binding residues include Arg204 and Arg215. An ATP-binding site is contributed by Gln243.

Belongs to the adenylate kinase family. AK2 subfamily. Monomer.

The protein resides in the cytoplasm. Its subcellular location is the cytosol. The protein localises to the mitochondrion intermembrane space. It carries out the reaction AMP + ATP = 2 ADP. Its function is as follows. Catalyzes the reversible transfer of the terminal phosphate group between ATP and AMP. Plays an important role in cellular energy homeostasis and in adenine nucleotide metabolism. Adenylate kinase activity is critical for regulation of the phosphate utilization and the AMP de novo biosynthesis pathways. The protein is Adenylate kinase of Phaeosphaeria nodorum (strain SN15 / ATCC MYA-4574 / FGSC 10173) (Glume blotch fungus).